The chain runs to 166 residues: Endoribonuclease YbeY (166 aa).

Zn(2+) contacts are provided by histidine 132, histidine 136, and histidine 142.

This sequence belongs to the endoribonuclease YbeY family. The cofactor is Zn(2+).

The protein resides in the cytoplasm. In terms of biological role, single strand-specific metallo-endoribonuclease involved in late-stage 70S ribosome quality control and in maturation of the 3' terminus of the 16S rRNA. The protein is Endoribonuclease YbeY of Clostridium botulinum (strain Langeland / NCTC 10281 / Type F).